Consider the following 254-residue polypeptide: Low affinity immunoglobulin gamma Fc region receptor III-A (254 aa).

Residues 1–20 (MWQLLLPTALLLLVSAGMRA) form the signal peptide. 2 Ig-like C2-type domains span residues 24-105 (PKAV…LEVH) and 107-189 (GWLL…VNIT). 2 disulfides stabilise this stretch: cysteine 47–cysteine 89 and cysteine 128–cysteine 172. A glycan (N-linked (GlcNAc...) asparagine) is linked at asparagine 187. A helical transmembrane segment spans residues 207 to 229 (YQVSFCLVMVLLFAVDTGLYFSV). Positions 234–254 (PSSTSDWKDHKFKWSKDPQDK) are disordered. Over residues 239–254 (DWKDHKFKWSKDPQDK) the composition is skewed to basic and acidic residues.

Forms a heterooligomeric complex with ITAM-containing signaling subunits, either a homodimer of CD247, a homodimer of FCER1G or a heterodimer of CD247 and FCER1G, to form a functional receptor complex. Interacts (via transmembrane domain) with signaling subunits; this interaction is a prerequisite for receptor complex expression on the cell surface and intracellular signal transduction. Binds the Fc region of antigen-complexed IgG with a preference for IgG1 and IgG3 isotypes. Interacts with CD2; this interaction is involved in NK cell activation and cytotoxicity. Interacts with S100A4; this interaction inhibits PKC-dependent phosphorylation of FCGR3A. In terms of processing, glycosylated. Glycosylation plays an inhibitory role in the interaction with IgG1 and IgG2. Undergoes rapid ectodomain shedding upon NK cell stimulation. The soluble form is produced by a proteolytic cleavage mediated by ADAM17. Repeated stimulation causes receptor shedding, a mechanism that allows for increased NK cell motility and detachment from opsonized target cells while avoiding activation-induced NK cell apoptosis. In terms of tissue distribution, lymphocytes and monocytes.

It is found in the cell membrane. Its subcellular location is the secreted. Receptor for the invariable Fc fragment of immunoglobulin gamma (IgG). Optimally activated upon binding of clustered antigen-IgG complexes displayed on cell surfaces, triggers lysis of antibody-coated cells, a process known as antibody-dependent cellular cytotoxicity (ADCC). Does not bind free monomeric IgG, thus avoiding inappropriate effector cell activation in the absence of antigenic trigger. Mediates IgG effector functions on natural killer (NK) cells. Binds antigen-IgG complexes generated upon infection and triggers NK cell-dependent cytokine production and degranulation to limit viral load and propagation. Involved in the generation of memory-like adaptive NK cells capable to produce high amounts of IFNG and to efficiently eliminate virus-infected cells via ADCC. Regulates NK cell survival and proliferation, in particular by preventing NK cell progenitor apoptosis. Fc-binding subunit that associates with CD247 and/or FCER1G adapters to form functional signaling complexes. Following the engagement of antigen-IgG complexes, triggers phosphorylation of immunoreceptor tyrosine-based activation motif (ITAM)-containing adapters with subsequent activation of phosphatidylinositol 3-kinase signaling and sustained elevation of intracellular calcium that ultimately drive NK cell activation. The ITAM-dependent signaling coupled to receptor phosphorylation by PKC mediates robust intracellular calcium flux that leads to production of pro-inflammatory cytokines, whereas in the absence of receptor phosphorylation it mainly activates phosphatidylinositol 3-kinase signaling leading to cell degranulation. Costimulates NK cells and trigger lysis of target cells independently of IgG binding. Mediates the antitumor activities of therapeutic antibodies. Upon ligation on monocytes triggers TNFA-dependent ADCC of IgG-coated tumor cells. Mediates enhanced ADCC in response to afucosylated IgGs. In Papio anubis (Olive baboon), this protein is Low affinity immunoglobulin gamma Fc region receptor III-A (FCGR3A).